Reading from the N-terminus, the 262-residue chain is Aconitate isomerase (262 aa).

Positions 1 to 22 (MFPRLPTLALGALLLASTPLLA) are cleaved as a signal peptide.

Monomer.

The enzyme catalyses trans-aconitate = cis-aconitate. Activated more than 1.5 fold by Ca(2+), Mg(2+), Mn(2+), Ni(2+), Fe(2+), DDT and 1,10-phenanthroline. Strongly inhibited by Ag(+) and Hg(+). Inhibited by addition of 20% (v/v) glycerol. No effect by addition of NADH or NADPH. Its function is as follows. Involved in assimilation of trans-aconitic acid. Preference for cis-aconitic acid is 14-fold higher than for trans-aconitic acid. Not active on intermediates of tricarboxylic acid (TCA) cycle including citric acid, succinic acid, fumaric acid, and 2-oxoglutaric acid or on other dicarboxilic acids including itaconic acid, formic acid, citraconic acid or maleic acid. This Pseudomonas sp protein is Aconitate isomerase.